A 173-amino-acid polypeptide reads, in one-letter code: Flavodoxin (173 aa).

Residues 2–168 form the Flavodoxin-like domain; the sequence is IGIFFSTSTG…RVAGWVEAVV (167 aa).

Belongs to the flavodoxin family. FMN is required as a cofactor.

Functionally, low-potential electron donor to a number of redox enzymes. The sequence is that of Flavodoxin from Chondrus crispus (Carrageen Irish moss).